The following is a 448-amino-acid chain: Extracellular serine protease (448 aa).

A signal peptide spans 1 to 20 (MKLSHLSLAIISAITLAACG). Positions 87-109 (KELENQASDDEVDPTKTGVVGNL) are disordered.

Belongs to the peptidase S17 family. The cofactor is a divalent metal cation.

This enzyme is a chymotrypsin-like serine protease. Degrades a variety of substrates present in the skin and hoof of the sheep, including elastin, keratin, fibrinogen and collagen. It seems to play an important role in the pathogenesis of sheep footrot. The protein is Extracellular serine protease (prvA) of Dichelobacter nodosus (Bacteroides nodosus).